The chain runs to 152 residues: Acidic phospholipase A2 57 (152 aa).

Residues 1–21 form the signal peptide; the sequence is MYPAHLLGLLAVCVSLLGAAS. Positions 22–27 are excised as a propeptide; the sequence is IPPLPL. 7 cysteine pairs are disulfide-bonded: Cys38–Cys104, Cys54–Cys151, Cys56–Cys72, Cys71–Cys132, Cys78–Cys125, Cys88–Cys118, and Cys111–Cys123. The Ca(2+) site is built by Tyr55, Gly57, and Gly59. Residue His75 is part of the active site. Asp76 is a binding site for Ca(2+). Residue Asp126 is part of the active site.

It belongs to the phospholipase A2 family. Group I subfamily. D49 sub-subfamily. Ca(2+) serves as cofactor. As to expression, expressed by the venom gland.

The protein localises to the secreted. The catalysed reaction is a 1,2-diacyl-sn-glycero-3-phosphocholine + H2O = a 1-acyl-sn-glycero-3-phosphocholine + a fatty acid + H(+). Its function is as follows. PLA2 catalyzes the calcium-dependent hydrolysis of the 2-acyl groups in 3-sn-phosphoglycerides. The protein is Acidic phospholipase A2 57 of Hydrophis hardwickii (Hardwick's spine-bellied seasnake).